The chain runs to 506 residues: MNMAEIAQLGVSNPYKQQYENYIGGAWVPPAGGEYFESTTPITGKPFTRVPRSGQQDVDAALDAAHAAKAAWARTSTTERANILNRIADRIEANLKLLAVAESIDNGKPVRETTAADLPLAVDHFRYFAGCIRAQEGGISEIDADTIAYHFHEPLGVVGQIIPWNFPLLMATWKLAPALAAGNCVVLKPAEQTPASILVLMEVIGDLLPPGVVNVINGFGLEAGKPLASSPRISKVAFTGETTTGRLIMQYASQNLIPVTLELGGKSPNIFFEDVLAADDAFFDKALEGFAMFALNQGEVCTCPSRALIQESIYDRFMERALKRVAAIRQGHPLDTGTMIGAQASAEQLEKILSYIDLGRKEGAQCLTGGERNVLDGDLAGGYYVKPTVFAGHNKMRIFQEEIFGPVVSVTTFKDEEEALAIANDTLYGLGAGVWTRDGARAFRMGRGIQAGRVWTNCYHAYPAHAAFGGYKQSGIGRENHRMMLDHYQQTKNLLVSYSPNALGFF.

Residue G240–G245 participates in NAD(+) binding. Residues E262 and C301 contribute to the active site.

The protein belongs to the aldehyde dehydrogenase family.

It catalyses the reaction an aldehyde + NAD(+) + H2O = a carboxylate + NADH + 2 H(+). The protein operates within alcohol metabolism; ethanol degradation; acetate from ethanol: step 2/2. It functions in the pathway ketone degradation; acetoin degradation. Involved in the catabolism of acetoin and ethanol. The protein is Acetaldehyde dehydrogenase 2 (acoD) of Cupriavidus necator (strain ATCC 17699 / DSM 428 / KCTC 22496 / NCIMB 10442 / H16 / Stanier 337) (Ralstonia eutropha).